Consider the following 115-residue polypeptide: Large ribosomal subunit protein uL22 (115 aa).

The protein belongs to the universal ribosomal protein uL22 family. As to quaternary structure, part of the 50S ribosomal subunit.

Its function is as follows. This protein binds specifically to 23S rRNA; its binding is stimulated by other ribosomal proteins, e.g. L4, L17, and L20. It is important during the early stages of 50S assembly. It makes multiple contacts with different domains of the 23S rRNA in the assembled 50S subunit and ribosome. In terms of biological role, the globular domain of the protein is located near the polypeptide exit tunnel on the outside of the subunit, while an extended beta-hairpin is found that lines the wall of the exit tunnel in the center of the 70S ribosome. This Coxiella burnetii (strain CbuK_Q154) (Coxiella burnetii (strain Q154)) protein is Large ribosomal subunit protein uL22.